Here is a 156-residue protein sequence, read N- to C-terminus: Interleukin-36 receptor antagonist protein (156 aa).

Residues Cys9 and Cys155 are joined by a disulfide bond.

Belongs to the IL-1 family. In terms of assembly, interacts with cargo receptor TMED10; the interaction mediates the translocation from the cytoplasm into the ERGIC (endoplasmic reticulum-Golgi intermediate compartment) and thereby secretion. Post-translationally, removal of N-terminal methionine is necessary for full antagonistic activity. As to expression, highly abundant in embryonic tissue and tissues containing epithelial cells.

It localises to the cytoplasm. The protein localises to the secreted. Inhibits the activity of interleukin-36 (IL36A,IL36B and IL36G) by binding to receptor IL1RL2/IL-36R and preventing its association with the coreceptor IL1RAP for signaling. Part of the IL-36 signaling system that is thought to be present in epithelial barriers and to take part in local inflammatory response; similar to the IL-1 system with which it shares the coreceptor. Proposed to play a role in skin inflammation. May be involved in the innate immune response to fungal pathogens. May activate an anti-inflammatory signaling pathway by recruiting SIGIRR. This is Interleukin-36 receptor antagonist protein from Mus musculus (Mouse).